The chain runs to 322 residues: Lymphokine-activated killer T-cell-originated protein kinase (322 aa).

M1 is subject to N-acetylmethionine. A phosphothreonine mark is found at T9 and T24. S32 is modified (phosphoserine). The Protein kinase domain occupies 32–322 (SPFMQKLGFG…HIVEALETDV (291 aa)). 38–46 (LGFGTGVNV) is a binding site for ATP. Residue S59 is modified to Phosphoserine. K64 serves as a coordination point for ATP. The Proton acceptor role is filled by D167. Residue K169 forms a Glycyl lysine isopeptide (Lys-Gly) (interchain with G-Cter in SUMO2) linkage. The segment at 320–322 (TDV) is PDZ-interaction.

Belongs to the protein kinase superfamily. STE Ser/Thr protein kinase family. MAP kinase kinase subfamily. In terms of assembly, interacts with DLG1 and TP53. Phosphorylated; in a cell-cycle dependent manner at mitosis. In terms of tissue distribution, expressed in the testis and placenta. In the testis, restrictedly expressed in outer cell layer of seminiferous tubules.

The enzyme catalyses L-seryl-[protein] + ATP = O-phospho-L-seryl-[protein] + ADP + H(+). It catalyses the reaction L-threonyl-[protein] + ATP = O-phospho-L-threonyl-[protein] + ADP + H(+). The catalysed reaction is L-tyrosyl-[protein] + ATP = O-phospho-L-tyrosyl-[protein] + ADP + H(+). Its activity is regulated as follows. Activated by phosphorylation. Functionally, phosphorylates MAP kinase p38. Seems to be active only in mitosis. May also play a role in the activation of lymphoid cells. When phosphorylated, forms a complex with TP53, leading to TP53 destabilization and attenuation of G2/M checkpoint during doxorubicin-induced DNA damage. The sequence is that of Lymphokine-activated killer T-cell-originated protein kinase (PBK) from Homo sapiens (Human).